The chain runs to 406 residues: Cysteine desulfurase (406 aa).

Lysine 226 bears the N6-(pyridoxal phosphate)lysine mark. The active-site Cysteine persulfide intermediate is the cysteine 364.

It belongs to the class-V pyridoxal-phosphate-dependent aminotransferase family. Csd subfamily. In terms of assembly, homodimer. Interacts with SufE and the SufBCD complex composed of SufB, SufC and SufD. The interaction with SufE is required to mediate the direct transfer of the sulfur atom from the S-sulfanylcysteine. Pyridoxal 5'-phosphate serves as cofactor.

It is found in the cytoplasm. It catalyses the reaction (sulfur carrier)-H + L-cysteine = (sulfur carrier)-SH + L-alanine. The catalysed reaction is L-selenocysteine + AH2 = hydrogenselenide + L-alanine + A + H(+). It functions in the pathway cofactor biosynthesis; iron-sulfur cluster biosynthesis. In terms of biological role, cysteine desulfurases mobilize the sulfur from L-cysteine to yield L-alanine, an essential step in sulfur metabolism for biosynthesis of a variety of sulfur-containing biomolecules. Component of the suf operon, which is activated and required under specific conditions such as oxidative stress and iron limitation. Acts as a potent selenocysteine lyase in vitro, that mobilizes selenium from L-selenocysteine. Selenocysteine lyase activity is however unsure in vivo. This chain is Cysteine desulfurase, found in Klebsiella pneumoniae (strain 342).